We begin with the raw amino-acid sequence, 55 residues long: Lantibiotic nisin-U (55 aa).

Residues 1 to 24 (MNNEDFNLDLIKISKENNSGASPR) constitute a propeptide that is removed on maturation. Thr26 carries the 2,3-didehydrobutyrine modification. Residues 27–31 (SKSLC) constitute a cross-link (lanthionine (Ser-Cys)). Ser29 is subject to 2,3-didehydroalanine (Ser). 4 consecutive cross-links (beta-methyllanthionine (Thr-Cys)) follow at residues 32-35 (TPGC), 37-43 (TGILMTC), 47-50 (TATC), and 49-52 (TCGC). A 2,3-didehydrobutyrine modification is found at Thr42.

Maturation of lantibiotics involves the enzymatic conversion of Thr, and Ser into dehydrated AA and the formation of thioether bonds with cysteine. This is followed by membrane translocation and cleavage of the modified precursor.

Its subcellular location is the secreted. Functionally, lanthionine-containing peptide antibiotic (lantibiotic) active on Gram-positive bacteria. The bactericidal activity of lantibiotics is based on depolarization of energized bacterial cytoplasmic membranes, initiated by the formation of aqueous transmembrane pores. This is Lantibiotic nisin-U (nsuA) from Streptococcus uberis.